Here is a 51-residue protein sequence, read N- to C-terminus: Insulin-2 (51 aa).

Disulfide bonds link Cys8–Cys37, Cys20–Cys50, and Cys36–Cys41.

This sequence belongs to the insulin family. Heterodimer of a B chain and an A chain linked by two disulfide bonds.

It is found in the secreted. Insulin decreases blood glucose concentration. It increases cell permeability to monosaccharides, amino acids and fatty acids. It accelerates glycolysis, the pentose phosphate cycle, and glycogen synthesis in liver. In Katsuwonus pelamis (Skipjack tuna), this protein is Insulin-2.